Reading from the N-terminus, the 402-residue chain is CCA-adding enzyme (402 aa).

Residues Gly-32 and Arg-35 each contribute to the ATP site. Residues Gly-32 and Arg-35 each contribute to the CTP site. Residues Asp-45 and Asp-47 each contribute to the Mg(2+) site. The ATP site is built by Arg-116, Asp-159, Arg-162, Arg-165, and Arg-168. Arg-116, Asp-159, Arg-162, Arg-165, and Arg-168 together coordinate CTP.

This sequence belongs to the tRNA nucleotidyltransferase/poly(A) polymerase family. Bacterial CCA-adding enzyme type 3 subfamily. In terms of assembly, homodimer. Requires Mg(2+) as cofactor.

The catalysed reaction is a tRNA precursor + 2 CTP + ATP = a tRNA with a 3' CCA end + 3 diphosphate. It catalyses the reaction a tRNA with a 3' CCA end + 2 CTP + ATP = a tRNA with a 3' CCACCA end + 3 diphosphate. In terms of biological role, catalyzes the addition and repair of the essential 3'-terminal CCA sequence in tRNAs without using a nucleic acid template. Adds these three nucleotides in the order of C, C, and A to the tRNA nucleotide-73, using CTP and ATP as substrates and producing inorganic pyrophosphate. tRNA 3'-terminal CCA addition is required both for tRNA processing and repair. Also involved in tRNA surveillance by mediating tandem CCA addition to generate a CCACCA at the 3' terminus of unstable tRNAs. While stable tRNAs receive only 3'-terminal CCA, unstable tRNAs are marked with CCACCA and rapidly degraded. This Streptococcus agalactiae serotype III (strain NEM316) protein is CCA-adding enzyme.